A 340-amino-acid polypeptide reads, in one-letter code: Ferrochelatase (340 aa).

His-189 and Glu-292 together coordinate Fe cation.

This sequence belongs to the ferrochelatase family.

The protein localises to the cytoplasm. It carries out the reaction heme b + 2 H(+) = protoporphyrin IX + Fe(2+). It functions in the pathway porphyrin-containing compound metabolism; protoheme biosynthesis; protoheme from protoporphyrin-IX: step 1/1. Its function is as follows. Catalyzes the ferrous insertion into protoporphyrin IX. The sequence is that of Ferrochelatase from Pseudomonas fluorescens (strain ATCC BAA-477 / NRRL B-23932 / Pf-5).